Reading from the N-terminus, the 443-residue chain is Tubulin epsilon and delta complex protein 2 (443 aa).

Residues 8–33 (RRLVAELRDALDSCAERQRQLEQSLR) are a coiled coil. Disordered regions lie at residues 45 to 72 (AETPAPEPTPGSEINKEAPSSACPPSPQ) and 93 to 146 (GLSK…PWVP). Over residues 106-124 (LKSGSASTATKASAPPSTS) the composition is skewed to low complexity.

In terms of assembly, interacts with TEDC1. Found in a complex with TEDC1, TEDC2, TUBE1 and TUBD1.

It localises to the cell projection. It is found in the cilium. The protein resides in the cytoplasm. The protein localises to the cytoskeleton. Its subcellular location is the microtubule organizing center. It localises to the centrosome. It is found in the centriole. Acts as a positive regulator of ciliary hedgehog signaling. Required for centriole stability. In Bos taurus (Bovine), this protein is Tubulin epsilon and delta complex protein 2.